An 85-amino-acid polypeptide reads, in one-letter code: uncharacterized protein (85 aa).

2 consecutive transmembrane segments (helical) span residues 16–34 (WALSLSILYVIGWCLCAYL) and 50–71 (LSCIYLPILFIVIGHWIIKIIF).

The protein to E.coli YhdT.

It localises to the cell membrane. This is an uncharacterized protein from Haemophilus influenzae (strain ATCC 51907 / DSM 11121 / KW20 / Rd).